A 173-amino-acid polypeptide reads, in one-letter code: Ribulose bisphosphate carboxylase small subunit, chloroplastic 7 (173 aa).

A chloroplast-targeting transit peptide spans 1-49 (MASIPATVATVAQANMVAPFTGLKSNAAFPVTKKVNDFSTLASNGGRVQ).

It belongs to the RuBisCO small chain family. Heterohexadecamer of 8 large and 8 small subunits.

The protein localises to the plastid. The protein resides in the chloroplast. Its function is as follows. RuBisCO catalyzes two reactions: the carboxylation of D-ribulose 1,5-bisphosphate, the primary event in carbon dioxide fixation, as well as the oxidative fragmentation of the pentose substrate. Both reactions occur simultaneously and in competition at the same active site. Although the small subunit is not catalytic it is essential for maximal activity. This Flaveria pringlei protein is Ribulose bisphosphate carboxylase small subunit, chloroplastic 7.